A 476-amino-acid polypeptide reads, in one-letter code: ATP synthase subunit beta (476 aa).

An ATP-binding site is contributed by 158-165 (GGAGVGKT).

Belongs to the ATPase alpha/beta chains family. In terms of assembly, F-type ATPases have 2 components, CF(1) - the catalytic core - and CF(0) - the membrane proton channel. CF(1) has five subunits: alpha(3), beta(3), gamma(1), delta(1), epsilon(1). CF(0) has three main subunits: a(1), b(2) and c(9-12). The alpha and beta chains form an alternating ring which encloses part of the gamma chain. CF(1) is attached to CF(0) by a central stalk formed by the gamma and epsilon chains, while a peripheral stalk is formed by the delta and b chains.

Its subcellular location is the cell inner membrane. The enzyme catalyses ATP + H2O + 4 H(+)(in) = ADP + phosphate + 5 H(+)(out). In terms of biological role, produces ATP from ADP in the presence of a proton gradient across the membrane. The catalytic sites are hosted primarily by the beta subunits. The protein is ATP synthase subunit beta of Paracidovorax citrulli (strain AAC00-1) (Acidovorax citrulli).